The sequence spans 604 residues: NADH-ubiquinone oxidoreductase chain 5 (604 aa).

16 consecutive transmembrane segments (helical) span residues 2–22, 41–61, 85–105, 115–135, 138–158, 169–189, 209–231, 239–259, 271–291, 299–318, 323–345, 364–384, 411–431, 455–475, 486–506, and 582–602; these read FSSLMLVSLLVLTLPIMLSIF, AFITSLIPTMMFIHSGQETII, MIFVPVALFVTWSIMEFSLWY, FFKYLLTFLITMMILVTANNL, LFIGWEGVGIMSFLLIGWWYG, AILYNRIGDIGFIMAMAWFLF, LPLLGLLLAATGKSAQFGLHPWL, TPVSALLHSSTMVVAGVFLLI, IQSLTLCLGAITTLFTAICAL, IIAFSTSSQLGLMIVTIGIN, AFLHICTHAFFKAMLFMCSGSII, MPFTTTSLIIGSLALTGIPFL, LIATSLTAVYSTRIIFFALLG, LLIGSIFAGFFISNNIYPTTV, LTALAVTILGFTLALELSLMT, and IKLYFLSFLITLTLSMLLFNL.

It belongs to the complex I subunit 5 family. Core subunit of respiratory chain NADH dehydrogenase (Complex I) which is composed of 45 different subunits.

The protein resides in the mitochondrion inner membrane. The enzyme catalyses a ubiquinone + NADH + 5 H(+)(in) = a ubiquinol + NAD(+) + 4 H(+)(out). In terms of biological role, core subunit of the mitochondrial membrane respiratory chain NADH dehydrogenase (Complex I) which catalyzes electron transfer from NADH through the respiratory chain, using ubiquinone as an electron acceptor. Essential for the catalytic activity and assembly of complex I. The sequence is that of NADH-ubiquinone oxidoreductase chain 5 (MT-ND5) from Equus caballus (Horse).